Consider the following 241-residue polypeptide: MSSDELKRQAAAVALEQVRDGMKLGLGTGSTAKHFVELLGAKVQGGLQVVGVPTSEVTRADAERCGIPLATLDEVDHLDLTVDGADEIDPALNLVKGGGGALLREKIVAAASGRMIVIADDSKLVETLGRFPLPIEVIPFGLAATRRAIEQALAVCGIDGELKLRNGKDGHAFVTDGGHWIVDAHLGRIPDAPRLAGLLSVIPGIVEHGLFIGLASSVVLASPHGIRIIERPACRDSGESK.

Substrate is bound by residues 28 to 31, 83 to 86, and 96 to 99; these read TGST, DGAD, and KGGG. E105 serves as the catalytic Proton acceptor. Position 123 (K123) interacts with substrate.

It belongs to the ribose 5-phosphate isomerase family. As to quaternary structure, homodimer.

The enzyme catalyses aldehydo-D-ribose 5-phosphate = D-ribulose 5-phosphate. It participates in carbohydrate degradation; pentose phosphate pathway; D-ribose 5-phosphate from D-ribulose 5-phosphate (non-oxidative stage): step 1/1. Its function is as follows. Catalyzes the reversible conversion of ribose-5-phosphate to ribulose 5-phosphate. This Rhodopseudomonas palustris (strain BisA53) protein is Ribose-5-phosphate isomerase A.